We begin with the raw amino-acid sequence, 383 residues long: tRNA(Met) cytidine acetate ligase (383 aa).

Residues 7-20 (ISEY…HLYQ), Gly-102, Asn-160, and 181-182 (RI) each bind ATP.

It belongs to the TmcAL family.

The protein resides in the cytoplasm. It catalyses the reaction cytidine(34) in elongator tRNA(Met) + acetate + ATP = N(4)-acetylcytidine(34) in elongator tRNA(Met) + AMP + diphosphate. In terms of biological role, catalyzes the formation of N(4)-acetylcytidine (ac(4)C) at the wobble position of elongator tRNA(Met), using acetate and ATP as substrates. First activates an acetate ion to form acetyladenylate (Ac-AMP) and then transfers the acetyl group to tRNA to form ac(4)C34. The polypeptide is tRNA(Met) cytidine acetate ligase (Exiguobacterium sibiricum (strain DSM 17290 / CCUG 55495 / CIP 109462 / JCM 13490 / 255-15)).